A 151-amino-acid chain; its full sequence is MESWLFLALVLVVALVGKNMSLIIATGVVMALKLIPFASKWLPVIQAKGINWGVTVISVAILIPVATGQIGFKDLINTFKSPAGWIAILAGIAVAILSRYGVDQLAAVPQVTVALVLGTIIGVVVFKGVAAGPVIASGMTYLVITLFNLHF.

A run of 5 helical transmembrane segments spans residues 4 to 24 (WLFL…SLII), 25 to 45 (ATGV…LPVI), 52 to 72 (WGVT…QIGF), 78 to 98 (TFKS…AILS), and 115 to 135 (LVLG…GPVI).

Belongs to the UPF0756 family.

The protein resides in the cell membrane. In Lactobacillus helveticus (strain DPC 4571), this protein is UPF0756 membrane protein lhv_0995.